The sequence spans 65 residues: MIVINIKENEPIDKALKRFKKKFEKTGVLKALRARSYYEKKSVRLRKEVIRASYRLKLQEAASND.

Belongs to the bacterial ribosomal protein bS21 family.

This chain is Small ribosomal subunit protein bS21, found in Cytophaga hutchinsonii (strain ATCC 33406 / DSM 1761 / CIP 103989 / NBRC 15051 / NCIMB 9469 / D465).